Here is a 314-residue protein sequence, read N- to C-terminus: Homoserine O-succinyltransferase (314 aa).

Residue C142 is the Acyl-thioester intermediate of the active site. K163 and S192 together coordinate substrate. The active-site Proton acceptor is the H235. E237 is an active-site residue. R249 lines the substrate pocket.

It belongs to the MetA family.

It localises to the cytoplasm. The enzyme catalyses L-homoserine + succinyl-CoA = O-succinyl-L-homoserine + CoA. The protein operates within amino-acid biosynthesis; L-methionine biosynthesis via de novo pathway; O-succinyl-L-homoserine from L-homoserine: step 1/1. Its function is as follows. Transfers a succinyl group from succinyl-CoA to L-homoserine, forming succinyl-L-homoserine. This Shewanella woodyi (strain ATCC 51908 / MS32) protein is Homoserine O-succinyltransferase.